The chain runs to 241 residues: MAGHSKWANIQHRKGRQDEKRGKIWTRIIREIVVAARAGGGDTAMNPRLRLAIDKAKAANMPADRIKYNVDKATGNQEGVSYEEIRYEGYGIGGAAIIIDTMTDNRVRTVAEVRHAFSKYGGNLGTDGSVSFQFKHCGQFMFAPGSSEDRIMEVALDAGAEDVVTDDDGTVEVLCAPPDFEAVQAALQAAGLVPELAEVTMRAENTVALDGEDAQRMQKLLDVLEDLDDTQAVFHNAELDE.

The disordered stretch occupies residues Met1–Lys20.

This sequence belongs to the TACO1 family.

It is found in the cytoplasm. This chain is Probable transcriptional regulatory protein Mpe_A1337, found in Methylibium petroleiphilum (strain ATCC BAA-1232 / LMG 22953 / PM1).